The sequence spans 215 residues: 3-demethoxyubiquinol 3-hydroxylase (215 aa).

Residues E64, E94, H97, E146, E178, and H181 each coordinate Fe cation.

This sequence belongs to the COQ7 family. It depends on Fe cation as a cofactor.

It is found in the cell membrane. The catalysed reaction is a 5-methoxy-2-methyl-3-(all-trans-polyprenyl)benzene-1,4-diol + AH2 + O2 = a 3-demethylubiquinol + A + H2O. The protein operates within cofactor biosynthesis; ubiquinone biosynthesis. In terms of biological role, catalyzes the hydroxylation of 2-nonaprenyl-3-methyl-6-methoxy-1,4-benzoquinol during ubiquinone biosynthesis. The sequence is that of 3-demethoxyubiquinol 3-hydroxylase from Coxiella burnetii (strain RSA 331 / Henzerling II).